The chain runs to 610 residues: Isocitrate dehydrogenase kinase/phosphatase (610 aa).

ATP contacts are provided by residues 359 to 365 and Lys-380; that span reads APGFKGT. Asp-419 is an active-site residue.

The protein belongs to the AceK family.

It localises to the cytoplasm. The catalysed reaction is L-seryl-[isocitrate dehydrogenase] + ATP = O-phospho-L-seryl-[isocitrate dehydrogenase] + ADP + H(+). Its function is as follows. Bifunctional enzyme which can phosphorylate or dephosphorylate isocitrate dehydrogenase (IDH) on a specific serine residue. This is a regulatory mechanism which enables bacteria to bypass the Krebs cycle via the glyoxylate shunt in response to the source of carbon. When bacteria are grown on glucose, IDH is fully active and unphosphorylated, but when grown on acetate or ethanol, the activity of IDH declines drastically concomitant with its phosphorylation. The chain is Isocitrate dehydrogenase kinase/phosphatase from Rhodopseudomonas palustris (strain TIE-1).